Reading from the N-terminus, the 626-residue chain is Chaperone protein HtpG (626 aa).

The segment at methionine 1 to arginine 339 is a; substrate-binding. The segment at glutamate 340 to lysine 555 is b. Residues leucine 556–glycine 626 form a c region.

This sequence belongs to the heat shock protein 90 family. As to quaternary structure, homodimer.

The protein resides in the cytoplasm. Its function is as follows. Molecular chaperone. Has ATPase activity. This chain is Chaperone protein HtpG, found in Haemophilus influenzae (strain PittEE).